A 159-amino-acid polypeptide reads, in one-letter code: Ribosomal RNA large subunit methyltransferase H (159 aa).

Glycine 108 is an S-adenosyl-L-methionine binding site.

It belongs to the RNA methyltransferase RlmH family. In terms of assembly, homodimer.

The protein localises to the cytoplasm. The catalysed reaction is pseudouridine(1915) in 23S rRNA + S-adenosyl-L-methionine = N(3)-methylpseudouridine(1915) in 23S rRNA + S-adenosyl-L-homocysteine + H(+). Its function is as follows. Specifically methylates the pseudouridine at position 1915 (m3Psi1915) in 23S rRNA. The chain is Ribosomal RNA large subunit methyltransferase H from Lactobacillus gasseri (strain ATCC 33323 / DSM 20243 / BCRC 14619 / CIP 102991 / JCM 1131 / KCTC 3163 / NCIMB 11718 / NCTC 13722 / AM63).